A 142-amino-acid polypeptide reads, in one-letter code: MVQPAPLITNAPTPKIPNIPAVALNVAPCIMAPISIDQLQGKYNSHVPTGFSSLISSAYGIHFLGSRDTNGPSPSNLSFLATSNSFDVNTGADSFEEGEEEEEEEDVYLFLLLPMIPATVTRPLPRMDLPSKILFLCQINIS.

This is an uncharacterized protein from Saccharomyces cerevisiae (strain ATCC 204508 / S288c) (Baker's yeast).